A 533-amino-acid chain; its full sequence is Sterol 26-hydroxylase, mitochondrial (533 aa).

Residues M1–A32 constitute a mitochondrion transit peptide. Positions I34–A60 are disordered. An N6-acetyllysine mark is found at K142, K232, K285, K296, and K375. The tract at residues P386–P400 is sterol-binding. C479 lines the heme pocket. An N6-acetyllysine mark is found at K512 and K523.

This sequence belongs to the cytochrome P450 family. As to quaternary structure, interacts with HSP70; this interaction is required for initial targeting to mitochondria. Heme serves as cofactor. Acetylation of Lys-125 and Lys-285 is observed in liver mitochondria from fasted mice but not from fed mice. In terms of tissue distribution, expressed in the gray and white matter of cerebellum (at protein level).

It localises to the mitochondrion inner membrane. It catalyses the reaction 5beta-cholestane-3alpha,7alpha,12alpha-triol + 6 reduced [adrenodoxin] + 3 O2 + 5 H(+) = (25R)-3alpha,7alpha,12alpha-trihydroxy-5beta-cholestan-26-oate + 6 oxidized [adrenodoxin] + 4 H2O. It carries out the reaction cholestanol + 2 reduced [adrenodoxin] + O2 + 2 H(+) = (25R)-26-hydroxycholestanol + 2 oxidized [adrenodoxin] + H2O. The catalysed reaction is (25R)-3beta-hydroxycholest-5-en-7-one-26-al + 2 reduced [adrenodoxin] + O2 + H(+) = (25R)-3beta-hydroxycholest-5-en-7-one-26-oate + 2 oxidized [adrenodoxin] + H2O. The enzyme catalyses (25R)-3beta,26-dihydroxycholest-5-en-7-one + 2 reduced [adrenodoxin] + O2 + 2 H(+) = (25R)-3beta-hydroxycholest-5-en-7-one-26-al + 2 oxidized [adrenodoxin] + 2 H2O. It catalyses the reaction 7-oxocholesterol + 2 reduced [adrenodoxin] + O2 + 2 H(+) = (25R)-3beta,26-dihydroxycholest-5-en-7-one + 2 oxidized [adrenodoxin] + H2O. It carries out the reaction calciol + 2 reduced [adrenodoxin] + O2 + 2 H(+) = calcidiol + 2 oxidized [adrenodoxin] + H2O. The catalysed reaction is (25R)-5beta-cholestane-3alpha,7alpha,12alpha,26-tetrol + 2 reduced [adrenodoxin] + O2 + 2 H(+) = (25R)-3alpha,7alpha,12alpha-trihydroxy-5beta-cholestan-26-al + 2 oxidized [adrenodoxin] + 2 H2O. The enzyme catalyses 2 reduced [adrenodoxin] + cholesterol + O2 + 2 H(+) = (25R)-cholest-5-ene-3beta,26-diol + 2 oxidized [adrenodoxin] + H2O. It catalyses the reaction (25R)-3beta,4beta-dihydroxycholest-5-en-26-al + 2 reduced [adrenodoxin] + O2 + H(+) = (25R)-3beta,4beta-dihydroxycholest-5-en-26-oate + 2 oxidized [adrenodoxin] + H2O. It carries out the reaction (25R)-4beta,26-dihydroxycholesterol + 2 reduced [adrenodoxin] + O2 + 2 H(+) = (25R)-3beta,4beta-dihydroxycholest-5-en-26-al + 2 oxidized [adrenodoxin] + 2 H2O. The catalysed reaction is 4beta-hydroxycholesterol + 2 reduced [adrenodoxin] + O2 + 2 H(+) = (25R)-4beta,26-dihydroxycholesterol + 2 oxidized [adrenodoxin] + H2O. The enzyme catalyses (25R)-3beta-hydroxy-5-cholesten-26-al + 2 reduced [adrenodoxin] + O2 + H(+) = (25R)-3beta-hydroxy-5-cholestenoate + 2 oxidized [adrenodoxin] + H2O. It catalyses the reaction (25R)-cholest-5-ene-3beta,26-diol + 2 reduced [adrenodoxin] + O2 + 2 H(+) = (25R)-3beta-hydroxy-5-cholesten-26-al + 2 oxidized [adrenodoxin] + 2 H2O. It carries out the reaction (25R)-3alpha,7alpha,12alpha-trihydroxy-5beta-cholestan-26-al + 2 reduced [adrenodoxin] + O2 + H(+) = (25R)-3alpha,7alpha,12alpha-trihydroxy-5beta-cholestan-26-oate + 2 oxidized [adrenodoxin] + H2O. The catalysed reaction is 5beta-cholestane-3alpha,7alpha,12alpha-triol + 2 reduced [adrenodoxin] + O2 + 2 H(+) = (25R)-5beta-cholestane-3alpha,7alpha,12alpha,26-tetrol + 2 oxidized [adrenodoxin] + H2O. It functions in the pathway hormone biosynthesis; cholecalciferol biosynthesis. It participates in steroid metabolism; cholesterol degradation. Its pathway is lipid metabolism; bile acid biosynthesis. Its function is as follows. Cytochrome P450 monooxygenase that catalyzes regio- and stereospecific hydroxylation of cholesterol and its derivatives. Hydroxylates (with R stereochemistry) the terminal methyl group of cholesterol side-chain in a three step reaction to yield at first a C26 alcohol, then a C26 aldehyde and finally a C26 acid. Regulates cholesterol homeostasis by catalyzing the conversion of excess cholesterol to bile acids via both the 'neutral' (classic) and the 'acid' (alternative) pathways. May also regulate cholesterol homeostasis via generation of active oxysterols, which act as ligands for NR1H2 and NR1H3 nuclear receptors, modulating the transcription of genes involved in lipid metabolism. Plays a role in cholestanol metabolism in the cerebellum. Similarly to cholesterol, hydroxylates cholestanol and may facilitate sterol diffusion through the blood-brain barrier to the systemic circulation for further degradation. Also hydroxylates retinal 7-ketocholesterol, a noxious oxysterol with pro-inflammatory and pro-apoptotic effects, and may play a role in its elimination from the retinal pigment epithelium. May play a redundant role in vitamin D biosynthesis. Catalyzes 25-hydroxylation of vitamin D3 that is required for its conversion to a functionally active form. The sequence is that of Sterol 26-hydroxylase, mitochondrial from Mus musculus (Mouse).